Consider the following 72-residue polypeptide: DNA-directed RNA polymerase subunit omega (72 aa).

The protein belongs to the RNA polymerase subunit omega family. In terms of assembly, the RNAP catalytic core consists of 2 alpha, 1 beta, 1 beta' and 1 omega subunit. When a sigma factor is associated with the core the holoenzyme is formed, which can initiate transcription.

It catalyses the reaction RNA(n) + a ribonucleoside 5'-triphosphate = RNA(n+1) + diphosphate. Promotes RNA polymerase assembly. Latches the N- and C-terminal regions of the beta' subunit thereby facilitating its interaction with the beta and alpha subunits. The chain is DNA-directed RNA polymerase subunit omega (rpoZ) from Clostridium tetani (strain Massachusetts / E88).